Here is a 624-residue protein sequence, read N- to C-terminus: tRNA uridine 5-carboxymethylaminomethyl modification enzyme MnmG (624 aa).

Residues 13-18 (GGGHAG), Val125, and Ser180 each bind FAD. 273 to 287 (GPRYCPSIEDKIVRF) is an NAD(+) binding site. Gln370 provides a ligand contact to FAD.

This sequence belongs to the MnmG family. Homodimer. Heterotetramer of two MnmE and two MnmG subunits. FAD is required as a cofactor.

It localises to the cytoplasm. Functionally, NAD-binding protein involved in the addition of a carboxymethylaminomethyl (cmnm) group at the wobble position (U34) of certain tRNAs, forming tRNA-cmnm(5)s(2)U34. In Legionella pneumophila (strain Lens), this protein is tRNA uridine 5-carboxymethylaminomethyl modification enzyme MnmG.